Reading from the N-terminus, the 284-residue chain is Rhomboid-type serine protease 2 (284 aa).

Transmembrane regions (helical) follow at residues 17–37 (PPAL…IKSV), 66–86 (FHVN…PLAV), 98–118 (VTLN…GLIF), 124–141 (VIGL…MAYH), 160–180 (IKLY…ILFP), and 182–202 (SSLP…YGYI). Ser128 serves as the catalytic Nucleophile. The active site involves His187.

Belongs to the peptidase S54 family.

It is found in the golgi apparatus membrane. Its subcellular location is the golgi apparatus. It localises to the cis-Golgi network membrane. The enzyme catalyses Cleaves type-1 transmembrane domains using a catalytic dyad composed of serine and histidine that are contributed by different transmembrane domains.. Functionally, probable rhomboid-type serine protease that catalyzes intramembrane proteolysis. The chain is Rhomboid-type serine protease 2 (RBD2) from Candida albicans (strain SC5314 / ATCC MYA-2876) (Yeast).